The primary structure comprises 257 residues: MLAKRIIPCLDVKDGQVVKGVQFRNHEIIGDIVPLAQRYAEEGADELVFYDITASSDGRVVDKSWVARVAEVIDIPFCVAGGIKTAEDAAKILEFGADKVSINSPALANPELITELADKFGVQCIVVGIDSYFDKETGKYQVYQFTGDEERTKATKWETKDWVQEVQKRGAGEIVLNMMNQDGVRNGYDLEQLNMVREVCHVPLIASGGAGEMVHFADVYKKTNVDGALAASVFHKQIINIGELKEYLAQQKIEVRR.

Residues aspartate 11 and aspartate 130 contribute to the active site.

It belongs to the HisA/HisF family. As to quaternary structure, heterodimer of HisH and HisF.

It localises to the cytoplasm. It carries out the reaction 5-[(5-phospho-1-deoxy-D-ribulos-1-ylimino)methylamino]-1-(5-phospho-beta-D-ribosyl)imidazole-4-carboxamide + L-glutamine = D-erythro-1-(imidazol-4-yl)glycerol 3-phosphate + 5-amino-1-(5-phospho-beta-D-ribosyl)imidazole-4-carboxamide + L-glutamate + H(+). It participates in amino-acid biosynthesis; L-histidine biosynthesis; L-histidine from 5-phospho-alpha-D-ribose 1-diphosphate: step 5/9. IGPS catalyzes the conversion of PRFAR and glutamine to IGP, AICAR and glutamate. The HisF subunit catalyzes the cyclization activity that produces IGP and AICAR from PRFAR using the ammonia provided by the HisH subunit. The chain is Imidazole glycerol phosphate synthase subunit HisF from Aliivibrio salmonicida (strain LFI1238) (Vibrio salmonicida (strain LFI1238)).